Consider the following 556-residue polypeptide: Innexin-7 (556 aa).

3 consecutive transmembrane segments (helical) span residues 21-41, 127-147, and 213-233; these read LVAS…AVLI, FFLL…KYFA, and AYYV…NVIL. Asn-267 carries an N-linked (GlcNAc...) asparagine glycan. A helical membrane pass occupies residues 310–330; it reads IFVFLWAWYILLTAFTVGNLF. A disordered region spans residues 431–556; sequence DESQVESGKN…IPKTAEKKHW (126 aa). The span at 435–447 shows a compositional bias: polar residues; the sequence is VESGKNTAPSTSH. The span at 452-461 shows a compositional bias: basic and acidic residues; that stretch reads RGTEQLEKNV. Residues 463 to 474 are compositionally biased toward polar residues; it reads SRQGSLSTQLRP. Basic residues predominate over residues 500-513; that stretch reads KGSKKPSPTKKKAS. The span at 514-527 shows a compositional bias: low complexity; sequence SKNSPQSSSNSRRP. The segment covering 539 to 556 has biased composition (basic and acidic residues); sequence HHHEPDSKIPKTAEKKHW.

This sequence belongs to the pannexin family.

The protein localises to the cell membrane. The protein resides in the cell junction. Its subcellular location is the gap junction. Its function is as follows. Structural component of the gap junctions. The protein is Innexin-7 (inx-7) of Caenorhabditis elegans.